A 673-amino-acid chain; its full sequence is Methionine--tRNA ligase (673 aa).

The short motif at 15–25 is the 'HIGH' region element; that stretch reads PYANGPIHLGH. Zn(2+) is bound by residues Cys146, Cys149, Cys159, and Cys162. The short motif at 332 to 336 is the 'KMSKS' region element; the sequence is KMSKS. Residue Lys335 coordinates ATP. Positions 572–673 constitute a tRNA-binding domain; the sequence is DFAKLDLRIA…EGAQPGMRVK (102 aa).

Belongs to the class-I aminoacyl-tRNA synthetase family. MetG type 1 subfamily. In terms of assembly, homodimer. It depends on Zn(2+) as a cofactor.

It is found in the cytoplasm. The enzyme catalyses tRNA(Met) + L-methionine + ATP = L-methionyl-tRNA(Met) + AMP + diphosphate. In terms of biological role, is required not only for elongation of protein synthesis but also for the initiation of all mRNA translation through initiator tRNA(fMet) aminoacylation. This chain is Methionine--tRNA ligase, found in Shewanella loihica (strain ATCC BAA-1088 / PV-4).